The sequence spans 376 residues: Succinyl-diaminopimelate desuccinylase (376 aa).

Residue H64 participates in Zn(2+) binding. D66 is a catalytic residue. Residue D97 participates in Zn(2+) binding. Catalysis depends on E131, which acts as the Proton acceptor. 3 residues coordinate Zn(2+): E132, E160, and H347.

Belongs to the peptidase M20A family. DapE subfamily. As to quaternary structure, homodimer. The cofactor is Zn(2+). It depends on Co(2+) as a cofactor.

It carries out the reaction N-succinyl-(2S,6S)-2,6-diaminopimelate + H2O = (2S,6S)-2,6-diaminopimelate + succinate. It participates in amino-acid biosynthesis; L-lysine biosynthesis via DAP pathway; LL-2,6-diaminopimelate from (S)-tetrahydrodipicolinate (succinylase route): step 3/3. Functionally, catalyzes the hydrolysis of N-succinyl-L,L-diaminopimelic acid (SDAP), forming succinate and LL-2,6-diaminopimelate (DAP), an intermediate involved in the bacterial biosynthesis of lysine and meso-diaminopimelic acid, an essential component of bacterial cell walls. The polypeptide is Succinyl-diaminopimelate desuccinylase (Wigglesworthia glossinidia brevipalpis).